We begin with the raw amino-acid sequence, 68 residues long: Beta-defensin 1 (68 aa).

An N-terminal signal peptide occupies residues 1–21 (MRTSYLLLFTLCLLLSEMASG). Residues 22 to 32 (DNFLTGLGHRS) constitute a propeptide that is removed on maturation. Intrachain disulfides connect Cys37/Cys66, Cys44/Cys59, and Cys49/Cys67.

Belongs to the beta-defensin family. In terms of assembly, monomer. Homodimer.

It is found in the secreted. The protein resides in the membrane. Functionally, has bactericidal activity. May act as a ligand for C-C chemokine receptor CCR6. Positively regulates the sperm motility and bactericidal activity in a CCR6-dependent manner. Binds to CCR6 and triggers Ca2+ mobilization in the sperm which is important for its motility. The protein is Beta-defensin 1 (DEFB1) of Hylobates moloch (Silvery gibbon).